Consider the following 332-residue polypeptide: Fructose-1,6-bisphosphatase class 1 (332 aa).

Mg(2+) is bound by residues E89, D110, L112, and D113. Substrate contacts are provided by residues 113-116 (DGSS), N206, Y239, 257-259 (YLY), and K269. Mg(2+) is bound at residue E275.

Belongs to the FBPase class 1 family. In terms of assembly, homotetramer. The cofactor is Mg(2+).

It localises to the cytoplasm. It carries out the reaction beta-D-fructose 1,6-bisphosphate + H2O = beta-D-fructose 6-phosphate + phosphate. Its pathway is carbohydrate biosynthesis; gluconeogenesis. The chain is Fructose-1,6-bisphosphatase class 1 from Shigella sonnei (strain Ss046).